The primary structure comprises 324 residues: DNA-directed RNA polymerase subunit alpha (324 aa).

The tract at residues Met-1 to Glu-230 is alpha N-terminal domain (alpha-NTD). The segment at Val-244–Ala-324 is alpha C-terminal domain (alpha-CTD).

The protein belongs to the RNA polymerase alpha chain family. As to quaternary structure, homodimer. The RNAP catalytic core consists of 2 alpha, 1 beta, 1 beta' and 1 omega subunit. When a sigma factor is associated with the core the holoenzyme is formed, which can initiate transcription.

The enzyme catalyses RNA(n) + a ribonucleoside 5'-triphosphate = RNA(n+1) + diphosphate. Its function is as follows. DNA-dependent RNA polymerase catalyzes the transcription of DNA into RNA using the four ribonucleoside triphosphates as substrates. The chain is DNA-directed RNA polymerase subunit alpha from Dechloromonas aromatica (strain RCB).